Consider the following 922-residue polypeptide: Band 3 anion transport protein (922 aa).

2 disordered regions span residues 1–36 and 355–389; these read MEGPGQDTEDALRRSLDPEGYEDTKGSRTSLGTMSN and QHPDTVRSPGGPTAPKDTGDKGQAPQDDDPLLRTR. At 1–416 the chain is on the cytoplasmic side; the sequence is MEGPGQDTED…LSDIRDALNP (416 aa). Basic and acidic residues predominate over residues 10–26; the sequence is DALRRSLDPEGYEDTKG. Residues 27–36 show a composition bias toward polar residues; the sequence is SRTSLGTMSN. The chain crosses the membrane as a helical span at residues 417-440; sequence QCLAAVIFIYFAALSPAITFGGLL. At 441–448 the chain is on the extracellular side; sequence GEKTRGMM. Residues 449-469 form a helical membrane-spanning segment; the sequence is GVSELLLSTSVQCLLFSLLSA. The Cytoplasmic portion of the chain corresponds to 470–472; it reads QPL. Residues 473-489 form a discontinuously helical membrane-spanning segment; that stretch reads LVVGFSGPLLVFEEAFF. Residues 490–498 lie on the Extracellular side of the membrane; the sequence is RFCEDHGLE. A helical membrane pass occupies residues 499-519; it reads YIVGRVWIGFWLILLVLLVVA. At 520–531 the chain is on the cytoplasmic side; that stretch reads CEGTVLVRYLSR. The helical transmembrane segment at 532–554 threads the bilayer; sequence YTQEIFSFLISLIFIYETFAKLV. Residues 555–581 lie on the Extracellular side of the membrane; that stretch reads TIFEAHPLQQSYDTDVSTEPSVPKPNT. A helical transmembrane segment spans residues 582–602; sequence ALLSLVLMAGTFFLALFLRQF. The Cytoplasmic portion of the chain corresponds to 603–613; the sequence is KNSVFLPGKVR. The chain crosses the membrane as a helical span at residues 614–634; that stretch reads RLIGDFGVPISIFVMALADFF. Over 635–674 the chain is Extracellular; sequence IKDTYTQKLKVPRGLEVTNGTARGWFIHPMGSATPFPIWM. Asn-653 carries N-linked (GlcNAc...) asparagine glycosylation. The helical transmembrane segment at 675-695 threads the bilayer; that stretch reads MFASPVPALLVFILIFLETQI. The Cytoplasmic segment spans residues 696-711; that stretch reads TTLIVSKPERKLVKGS. The chain crosses the membrane as a helical span at residues 712-730; sequence GFHLDLLLIVAMGGLAALF. Residues 731–748 form a discontinuously helical membrane-spanning segment; that stretch reads GMPWLSATTVRTITHANA. At 749–771 the chain is on the cytoplasmic side; the sequence is LTVVGKSAVPGERAHIVEVKEQR. The next 2 helical transmembrane spans lie at 772 to 792 and 793 to 811; these read LSGLLVAVLIGVSILMEPILK and YIPLAVLFGIFLYMGVTSL. Topologically, residues 812–849 are cytoplasmic; that stretch reads FGIQLFDRILLLLMPPKYHPKEPYVTRVKTWRITSSPL. Positions 850-880 form an intramembrane region, discontinuously helical; it reads TQILVVALLWGVKVSPASLRCPFVLVLTVPL. At 881 to 922 the chain is on the cytoplasmic side; that stretch reads RRLLLPRIFSEIELKCLDTDDAVVTFEEAEGQDVYNEVQMPS.

It belongs to the anion exchanger (TC 2.A.31) family. A dimer in solution, it spans the membrane asymmetrically and appears to be tetrameric. Erythrocytes.

The protein localises to the cell membrane. It localises to the basolateral cell membrane. The catalysed reaction is hydrogencarbonate(in) + chloride(out) = hydrogencarbonate(out) + chloride(in). Functions both as a transporter that mediates electroneutral anion exchange across the cell membrane and as a structural protein. Major integral membrane glycoprotein of the erythrocyte membrane; required for normal flexibility and stability of the erythrocyte membrane and for normal erythrocyte shape via the interactions of its cytoplasmic domain with cytoskeletal proteins, glycolytic enzymes, and hemoglobin. Functions as a transporter that mediates the 1:1 exchange of inorganic anions across the erythrocyte membrane. Mediates chloride-bicarbonate exchange in the kidney, and is required for normal acidification of the urine. The chain is Band 3 anion transport protein (SLC4A1) from Gallus gallus (Chicken).